The sequence spans 1574 residues: Plexin-C1 (1574 aa).

Positions 1–34 (MEVSRRKTPPRPPYPAAPLPLIAYLLALAAPARG) are cleaved as a signal peptide. The region spanning 35–452 (ADEPVWRSEQ…AGKEVRRIPV (418 aa)) is the Sema domain. Over 35-950 (ADEPVWRSEQ…YVEQESVPST (916 aa)) the chain is Extracellular. Cys64 and Cys87 are disulfide-bonded. 3 N-linked (GlcNAc...) asparagine glycosylation sites follow: Asn86, Asn143, and Asn149. Cysteines 156 and 194 form a disulfide. N-linked (GlcNAc...) asparagine glycosylation is present at Asn252. A disulfide bridge links Cys283 with Cys329. N-linked (GlcNAc...) asparagine glycosylation is found at Asn386 and Asn407. Disulfide bonds link Cys455–Cys472, Cys461–Cys506, Cys464–Cys481, and Cys475–Cys487. 3 N-linked (GlcNAc...) asparagine glycosylation sites follow: Asn694, Asn773, and Asn802. Residues 951-971 (WYFLIALPILLAIVIVVAVVV) form a helical membrane-spanning segment. Topologically, residues 972-1574 (TRYKSKELSR…FDEKKKCKWM (603 aa)) are cytoplasmic. Position 984 is a phosphoserine (Ser984).

Belongs to the plexin family. In terms of assembly, monomer. Homodimer. Interacts with SEMA7A. Detected on dendritic cells, skin Langerhans cells and neutrophils (at protein level).

It localises to the membrane. Functionally, receptor for SEMA7A, for vaccinia virus semaphorin A39R and for herpesvirus Sema protein. Binding of semaphorins triggers cellular responses leading to the rearrangement of the cytoskeleton and to secretion of IL6 and IL8. This Mus musculus (Mouse) protein is Plexin-C1 (Plxnc1).